The sequence spans 182 residues: Adenine phosphoribosyltransferase (182 aa).

The protein belongs to the purine/pyrimidine phosphoribosyltransferase family. Homodimer.

The protein resides in the cytoplasm. It carries out the reaction AMP + diphosphate = 5-phospho-alpha-D-ribose 1-diphosphate + adenine. It functions in the pathway purine metabolism; AMP biosynthesis via salvage pathway; AMP from adenine: step 1/1. Catalyzes a salvage reaction resulting in the formation of AMP, that is energically less costly than de novo synthesis. This is Adenine phosphoribosyltransferase from Ectopseudomonas mendocina (strain ymp) (Pseudomonas mendocina).